Consider the following 428-residue polypeptide: Aerobic C4-dicarboxylate transport protein (428 aa).

The next 9 membrane-spanning stretches (helical) occupy residues 5 to 27 (LFKS…GHYY), 47 to 64 (MIIA…IAGM), 77 to 99 (ALLY…VNVV), 141 to 163 (VIGA…FGFA), 184 to 206 (VIFG…AMAF), 216 to 238 (LVQL…VVVL), 289 to 311 (VVGL…YLTM), 326 to 348 (IFHQ…GVTG), and 353 to 375 (VLAA…ILGI).

The protein belongs to the dicarboxylate/amino acid:cation symporter (DAACS) (TC 2.A.23) family.

Its subcellular location is the cell inner membrane. In terms of biological role, responsible for the transport of dicarboxylates such as succinate, fumarate, and malate from the periplasm across the membrane. The polypeptide is Aerobic C4-dicarboxylate transport protein (Salmonella typhi).